The primary structure comprises 389 residues: Cobalt-precorrin-5B C(1)-methyltransferase (389 aa).

The tract at residues 1–25 (MESRADHAVPADEGHGATEPPRGRD) is disordered.

Belongs to the CbiD family.

The catalysed reaction is Co-precorrin-5B + S-adenosyl-L-methionine = Co-precorrin-6A + S-adenosyl-L-homocysteine. It functions in the pathway cofactor biosynthesis; adenosylcobalamin biosynthesis; cob(II)yrinate a,c-diamide from sirohydrochlorin (anaerobic route): step 6/10. Catalyzes the methylation of C-1 in cobalt-precorrin-5B to form cobalt-precorrin-6A. This is Cobalt-precorrin-5B C(1)-methyltransferase from Nitratidesulfovibrio vulgaris (strain ATCC 29579 / DSM 644 / CCUG 34227 / NCIMB 8303 / VKM B-1760 / Hildenborough) (Desulfovibrio vulgaris).